The chain runs to 101 residues: Small ribosomal subunit protein uS14 (101 aa).

It belongs to the universal ribosomal protein uS14 family. Part of the 30S ribosomal subunit. Contacts proteins S3 and S10.

Its function is as follows. Binds 16S rRNA, required for the assembly of 30S particles and may also be responsible for determining the conformation of the 16S rRNA at the A site. The chain is Small ribosomal subunit protein uS14 from Rhizobium meliloti (strain 1021) (Ensifer meliloti).